The chain runs to 488 residues: MTKTERYLQLRSMIPEMRRIKRIHFVGIGGAGMGGIAEVLVNEGYVVSGSDIAQNAVTDRLCLLGAKIHIGHGADNVQQADVVVVSTAINPQNPEIIAAKELRIPIVRRAEMLAELMRYRHGVAIAGTHGKTTTTSLIASLYGQAGRDPTFVIGGLLNSAGTNARLGTSRYLIAEADESDASFLHLQPMVSVVTNIEADHMDTYGGDFEKLKSTFVDFLHNLPFYGVAVVCIDDPVVREIMPRISRHIVTYGFRDDADVQALNFSQQGHQCRFTVRRKGKEDLDLLLNLPGQHNVLNALAAIAVATEDEIDDSAIIQALAEFQGIGRRFQHLGKFATPKGEVMLVDDYGHHPSEVAATIKAARAGWPEKRLVMAYQPHRYTRTRDLYEDFIEVLSQVDCLLLLDVYSAGEAPIPGADGRALCRSIRLRGQLDPIFIASPEQLAEVLPDVLQEGDLLLTQGAGNIGALSRKLAASELGFSTGATTEVKP.

127-133 serves as a coordination point for ATP; the sequence is GTHGKTT.

It belongs to the MurCDEF family.

The protein resides in the cytoplasm. It catalyses the reaction UDP-N-acetyl-alpha-D-muramate + L-alanine + ATP = UDP-N-acetyl-alpha-D-muramoyl-L-alanine + ADP + phosphate + H(+). Its pathway is cell wall biogenesis; peptidoglycan biosynthesis. Cell wall formation. This is UDP-N-acetylmuramate--L-alanine ligase from Shewanella oneidensis (strain ATCC 700550 / JCM 31522 / CIP 106686 / LMG 19005 / NCIMB 14063 / MR-1).